Here is a 426-residue protein sequence, read N- to C-terminus: Trigger factor (426 aa).

Positions Gly-160–Pro-240 constitute a PPIase FKBP-type domain.

Belongs to the FKBP-type PPIase family. Tig subfamily.

It is found in the cytoplasm. The enzyme catalyses [protein]-peptidylproline (omega=180) = [protein]-peptidylproline (omega=0). Its function is as follows. Involved in protein export. Acts as a chaperone by maintaining the newly synthesized protein in an open conformation. Functions as a peptidyl-prolyl cis-trans isomerase. The chain is Trigger factor from Chlorobaculum tepidum (strain ATCC 49652 / DSM 12025 / NBRC 103806 / TLS) (Chlorobium tepidum).